Reading from the N-terminus, the 241-residue chain is Uridylate kinase (241 aa).

15-18 contributes to the ATP binding site; that stretch reads KISG. The segment at 23-28 is involved in allosteric activation by GTP; sequence GDQGFG. Gly-57 is a UMP binding site. ATP-binding residues include Gly-58 and Arg-62. UMP is bound by residues Asp-77 and 138-145; that span reads TGNPYFTT. Residues Thr-165, Tyr-171, and Asp-174 each contribute to the ATP site.

Belongs to the UMP kinase family. Homohexamer.

The protein localises to the cytoplasm. The enzyme catalyses UMP + ATP = UDP + ADP. Its pathway is pyrimidine metabolism; CTP biosynthesis via de novo pathway; UDP from UMP (UMPK route): step 1/1. Its activity is regulated as follows. Allosterically activated by GTP. Inhibited by UTP. Catalyzes the reversible phosphorylation of UMP to UDP. The polypeptide is Uridylate kinase (Paracoccus zeaxanthinifaciens).